An 80-amino-acid polypeptide reads, in one-letter code: Myocilin opposite strand protein (80 aa).

Positions 53-80 (EQAPPPHRTYLTVPPAPPPSPAEDPTVS) are disordered.

The sequence is that of Myocilin opposite strand protein from Homo sapiens (Human).